The following is a 269-amino-acid chain: Undecaprenyl-diphosphatase (269 aa).

The next 7 helical transmembrane spans lie at 42–62 (WDTF…ALYF), 83–103 (LTVL…HGVI), 110–130 (PYLP…LLVV), 142–162 (GMAL…LSLL), 186–206 (AEFS…LDLL), 219–239 (AIAI…KFLI), and 247–267 (FTPF…LIYI).

Belongs to the UppP family.

The protein resides in the cell inner membrane. It catalyses the reaction di-trans,octa-cis-undecaprenyl diphosphate + H2O = di-trans,octa-cis-undecaprenyl phosphate + phosphate + H(+). In terms of biological role, catalyzes the dephosphorylation of undecaprenyl diphosphate (UPP). Confers resistance to bacitracin. In Caulobacter sp. (strain K31), this protein is Undecaprenyl-diphosphatase.